A 429-amino-acid chain; its full sequence is Ribosomal RNA small subunit methyltransferase B (429 aa).

S-adenosyl-L-methionine-binding positions include 254-260 (CAAPGGK), aspartate 277, aspartate 303, and aspartate 322. Cysteine 375 serves as the catalytic Nucleophile.

Belongs to the class I-like SAM-binding methyltransferase superfamily. RsmB/NOP family.

It localises to the cytoplasm. It catalyses the reaction cytidine(967) in 16S rRNA + S-adenosyl-L-methionine = 5-methylcytidine(967) in 16S rRNA + S-adenosyl-L-homocysteine + H(+). Functionally, specifically methylates the cytosine at position 967 (m5C967) of 16S rRNA. This is Ribosomal RNA small subunit methyltransferase B from Shigella flexneri.